Consider the following 160-residue polypeptide: Baculoviral IAP repeat-containing protein 5.1-B (160 aa).

One copy of the BIR repeat lies at 13–83 (QRLQDFRNMY…EGWEPDDDPW (71 aa)). Phosphothreonine; by CDK1 is present on Thr-43. 4 residues coordinate Zn(2+): Cys-66, Cys-69, His-86, and Cys-93.

This sequence belongs to the IAP family. As to quaternary structure, component of the CPC at least composed of survivin/birc5, incenp, cdca8/borealin and/or cdca9/dasra-A, and aurkb/aurora-B. Interacts directly with incenp (via N-terminus), and may weakly interact with aurkb (via N-terminus) to stabilize the complex. Interacts with GTP-bound ran in both the S and M phases of the cell cycle. Also found in a complex with ubiquitin-mediated signaling proteins including at least usp9x/xFAM, nploc4/npl4 and ufd1. Ubiquitination is required for centrosome-targeting.

The protein localises to the cytoplasm. It is found in the nucleus. The protein resides in the chromosome. Its subcellular location is the centromere. It localises to the cytoskeleton. The protein localises to the spindle. Component of the chromosomal passenger complex (CPC), a complex that acts as a key regulator of mitosis. The CPC complex has essential functions at the centromere in ensuring correct chromosome alignment and segregation and is required for chromatin-induced microtubule stabilization and spindle assembly. Stimulates the mitotic kinase activity of aurkb/aurora-B in the CPC. Does not appear to exhibit anti-apoptotic activity. CPC. Does not appear to exhibit anti-apoptotic activity. In Xenopus laevis (African clawed frog), this protein is Baculoviral IAP repeat-containing protein 5.1-B (birc5.1-b).